The sequence spans 261 residues: MSYTPGIGGDSAQLAQRISSNIQKITQCSVEIQRTLNQLGTPQDSPELRQLLQQKQQYTNQLAKETDKYIKEFGSLPTTPSEQRQRKIQKDRLVAEFTTSLTNFQKAQRQAAEREKEFVARVRASSRVSGGFPEDSSKEKNLVSWESQTQPQVQVQDEEITEDDLRLIHERESSIRQLEADIMDINEIFKDLGMMIHEQGDMIDSIEANVESAEVHVQQANQQLSRAADYQRKSRKTLCIIIFILVVRIVIICLIVWGLKG.

At Ser-2 the chain carries N-acetylserine. At Ser-2–Leu-238 the chain is on the cytoplasmic side. A Phosphothreonine modification is found at Thr-4. Ser-45 bears the Phosphoserine mark. Residues Glu-47–Lys-68 are a coiled coil. Ser-75 is subject to Phosphoserine. Phosphothreonine is present on Thr-79. A phosphoserine mark is found at Ser-125, Ser-126, Ser-129, and Ser-205. Residues Val-128 to Gln-148 are disordered. One can recognise a t-SNARE coiled-coil homology domain in the interval Leu-165–Ala-227. Residues Cys-239–Leu-259 form a helical; Anchor for type IV membrane protein membrane-spanning segment. The Vesicular segment spans residues Lys-260 to Gly-261.

Belongs to the syntaxin family. Interacts with VPS11, VPS16 and VPS18. Interacts with VPS33A. Forms a SNARE complex with VTI1B, STX8 and VAMP8 which functions in the homotypic fusion of late endosomes. Component of the SNARE complex composed of STX7, STX8, VAMP7 and VTI1B that is required for heterotypic fusion of late endosomes with lysosomes. Interacts with TPC1.

It localises to the early endosome membrane. In terms of biological role, may be involved in protein trafficking from the plasma membrane to the early endosome (EE) as well as in homotypic fusion of endocytic organelles. Mediates the endocytic trafficking from early endosomes to late endosomes and lysosomes. The polypeptide is Syntaxin-7 (Stx7) (Mus musculus (Mouse)).